The chain runs to 211 residues: uncharacterized protein (211 aa).

This is an uncharacterized protein from Methanocaldococcus jannaschii (strain ATCC 43067 / DSM 2661 / JAL-1 / JCM 10045 / NBRC 100440) (Methanococcus jannaschii).